A 256-amino-acid polypeptide reads, in one-letter code: Small ribosomal subunit protein eS1 (256 aa).

The segment covering 1 to 18 has biased composition (basic residues); it reads MAVGKNKRLSKGKKGLKK. Positions 1–20 are disordered; it reads MAVGKNKRLSKGKKGLKKKA. Alanine 2 is subject to N-acetylalanine; partial.

Belongs to the eukaryotic ribosomal protein eS1 family. Component of the small ribosomal subunit. Mature ribosomes consist of a small (40S) and a large (60S) subunit. The 40S subunit contains about 33 different proteins and 1 molecule of RNA (18S). The 60S subunit contains about 49 different proteins and 3 molecules of RNA (25S, 5.8S and 5S).

The protein resides in the cytoplasm. The polypeptide is Small ribosomal subunit protein eS1 (Chaetomium globosum (strain ATCC 6205 / CBS 148.51 / DSM 1962 / NBRC 6347 / NRRL 1970) (Soil fungus)).